Reading from the N-terminus, the 523-residue chain is Spastin (523 aa).

Residues 1–41 lie on the Cytoplasmic side of the membrane; sequence MLDKLSKHKTMFYERVKEIDQILFSQQQAKQTQLDNLSNNN. The helical intramembrane region spans 42–58; the sequence is ASGGFFSGFMKMFSPLS. 3 stretches are compositionally biased toward low complexity: residues 57 to 71, 171 to 184, and 193 to 210; these read LSTPPNSSSNNNSNT, QQPPQQSSQQQQQP, and TALRNTTSATSSTTTANN. 2 disordered regions span residues 57 to 77 and 129 to 218; these read LSTPPNSSSNNNSNTQQAISQ and GISS…LDQI. The Cytoplasmic portion of the chain corresponds to 59–523; it reads TPPNSSSNNN…ESYGTFAKGI (465 aa).

The protein belongs to the AAA ATPase family. Spastin subfamily. Homohexamer. The homohexamer is stabilized by ATP-binding. The homohexamer may adopt a ring conformation through which microtubules pass prior to being severed.

The protein resides in the membrane. It catalyses the reaction n ATP + n H2O + a microtubule = n ADP + n phosphate + (n+1) alpha/beta tubulin heterodimers.. In terms of biological role, ATP-dependent microtubule severing protein. Stimulates microtubule minus-end depolymerization and poleward microtubule flux in the mitotic spindle. The protein is Spastin of Naegleria gruberi (Amoeba).